A 342-amino-acid polypeptide reads, in one-letter code: MITMIYKGNRAAWAYIVARTKVMKSRLLKPEDFRKLLNMEFDEIVRYIGETEYKKEIDELGYKFTGPRLLDHALYANLARTYRKLIEVSFGASKFLIMKYLEKWDVWNIINIIRGKMANVQPEVVDDILVPAGERDMDFWKTLLVKDIEEIVKSFEGTPYYEPLSKIGSEDMSKIEDGLYKVYYRELLKLNPSDFAMKLFLDFIKMEIDIRNVKTLLRLKAEDATPDEIMECTIPGGYELTEEELRKLAAMPIDEMIKALEGYWFWNDVQIEGKEVAAVEIEFDKVWIKTISKRASNYPLSILPVLQYIVLKKVEVDNLRVLGWGKYYGLPSEEIERQMVIL.

This sequence belongs to the V-ATPase V0D/AC39 subunit family. As to quaternary structure, has multiple subunits with at least A(3), B(3), C, D, E, F, H, I and proteolipid K(x).

It is found in the cell membrane. In terms of biological role, component of the A-type ATP synthase that produces ATP from ADP in the presence of a proton gradient across the membrane. This chain is A-type ATP synthase subunit C, found in Archaeoglobus fulgidus (strain ATCC 49558 / DSM 4304 / JCM 9628 / NBRC 100126 / VC-16).